A 203-amino-acid chain; its full sequence is NAD(P)H dehydrogenase (quinone) (203 aa).

One can recognise a Flavodoxin-like domain in the interval Val-7 to Val-194. FMN contacts are provided by residues Ser-13 to Ile-18 and Thr-82 to Phe-84. NAD(+) is bound at residue Tyr-15. Residue Trp-102 participates in substrate binding. Residues Ser-117–Gly-122 and His-137 contribute to the FMN site.

Belongs to the WrbA family. The cofactor is FMN.

It carries out the reaction a quinone + NADH + H(+) = a quinol + NAD(+). The enzyme catalyses a quinone + NADPH + H(+) = a quinol + NADP(+). In Parvibaculum lavamentivorans (strain DS-1 / DSM 13023 / NCIMB 13966), this protein is NAD(P)H dehydrogenase (quinone).